A 182-amino-acid chain; its full sequence is Dirigent protein 5 (182 aa).

The N-terminal stretch at 1–23 (MVGQMKSFLFLFVFLVLTKTVIS) is a signal peptide. A disulfide bridge links C35 with C181. N-linked (GlcNAc...) asparagine glycosylation is found at N54 and N118.

It belongs to the plant dirigent protein family. As to quaternary structure, homodimer. In terms of tissue distribution, confined to shoot meristem, vascular region of cotyledons and siliques abscission zone.

Its subcellular location is the secreted. It localises to the extracellular space. It is found in the apoplast. Its function is as follows. Dirigent proteins impart stereoselectivity on the phenoxy radical-coupling reaction, yielding optically active lignans from two molecules of coniferyl alcohol in the biosynthesis of lignans, flavonolignans, and alkaloids and thus plays a central role in plant secondary metabolism. Enantiocomplementary dirigent protein that mediates the laccase-catalyzed enantioselective oxidative phenol coupling of (E)-coniferyl alcohol to (-)-pinoresinol. The polypeptide is Dirigent protein 5 (DIR5) (Arabidopsis thaliana (Mouse-ear cress)).